A 2157-amino-acid chain; its full sequence is Unconventional myosin-IXb (2157 aa).

Position 2 is an N-acetylserine (serine 2). The Ras-associating domain maps to alanine 15–alanine 114. In terms of domain architecture, Myosin motor spans alanine 146–histidine 953. Residue glycine 239–threonine 246 participates in ATP binding. The segment at alanine 709 to proline 734 is disordered. Phosphoserine is present on residues serine 716 and serine 717. Residues lysine 844–serine 855 form an actin-binding region. The interval leucine 940–phenylalanine 1044 is neck or regulatory domain. 4 IQ domains span residues valine 957–leucine 977, methionine 979–glutamate 1000, arginine 1001–histidine 1023, and glutamine 1024–lysine 1053. At serine 1045 the chain carries Phosphoserine. The tail stretch occupies residues serine 1045–glycine 2157. A coiled-coil region spans residues glutamine 1046–glutamate 1071. Disordered stretches follow at residues glutamine 1046–glutamine 1298, alanine 1320–valine 1410, and glycine 1455–arginine 1484. 5 stretches are compositionally biased toward basic and acidic residues: residues glutamate 1050 to glutamate 1063, serine 1109 to serine 1122, glutamate 1136 to lysine 1160, serine 1168 to threonine 1183, and leucine 1191 to glutamate 1201. Phosphoserine occurs at positions 1114, 1115, and 1122. A compositionally biased stretch (polar residues) spans glutamate 1211–proline 1222. Serine 1242, serine 1253, serine 1261, and serine 1267 each carry phosphoserine. At threonine 1271 the chain carries Phosphothreonine. Phosphoserine occurs at positions 1290, 1323, and 1331. Position 1346 is a phosphothreonine (threonine 1346). Phosphoserine occurs at positions 1354, 1356, and 1405. Over residues alanine 1467–glycine 1478 the composition is skewed to basic and acidic residues. The Phorbol-ester/DAG-type zinc finger occupies glycine 1632 to cysteine 1681. One can recognise a Rho-GAP domain in the interval aspartate 1703–tyrosine 1888. The interaction with RHOA stretch occupies residues alanine 1739–arginine 1744. Residues leucine 1880–alanine 1901 adopt a coiled-coil conformation. Phosphoserine is present on residues serine 1926, serine 1972, serine 1992, and serine 1999. Positions glutamate 1959–proline 1989 form a coiled coil. Basic and acidic residues predominate over residues isoleucine 1980–aspartate 1993. Residues isoleucine 1980 to glycine 2157 form a disordered region. Residue threonine 2005 is modified to Phosphothreonine. Positions proline 2021–leucine 2037 are enriched in pro residues. Serine 2050 carries the post-translational modification Phosphoserine. Residues proline 2081–proline 2093 are compositionally biased toward low complexity. Positions arginine 2095–glutamine 2106 are enriched in basic and acidic residues. Phosphoserine is present on serine 2141.

The protein belongs to the TRAFAC class myosin-kinesin ATPase superfamily. Myosin family. As to quaternary structure, interacts (via IQ domains) with CALM. Interacts with RHOA. Interacts (via Rho-GAP domain) with ROBO1; this inhibits the interaction with RHOA and the stimulation of RHOA GTPase activity, and thereby increases the levels of active RHOA. In terms of tissue distribution, detected in peripheral blood leukocytes (at protein level). Expressed predominantly in peripheral blood leukocytes and at lower levels, in thymus, spleen, testis, prostate, ovary, brain, small intestine and lung.

The protein resides in the cytoplasm. It localises to the cell cortex. It is found in the perinuclear region. The protein localises to the cytoskeleton. Functionally, myosins are actin-based motor molecules with ATPase activity. Unconventional myosins serve in intracellular movements. Binds actin with high affinity both in the absence and presence of ATP and its mechanochemical activity is inhibited by calcium ions. Also acts as a GTPase activator for RHOA. Plays a role in the regulation of cell migration via its role as RHOA GTPase activator. This is regulated by its interaction with the SLIT2 receptor ROBO1; interaction with ROBO1 impairs interaction with RHOA and subsequent activation of RHOA GTPase activity, and thereby leads to increased levels of active, GTP-bound RHOA. The sequence is that of Unconventional myosin-IXb (MYO9B) from Homo sapiens (Human).